The chain runs to 125 residues: Large ribosomal subunit protein bL12 (125 aa).

This sequence belongs to the bacterial ribosomal protein bL12 family. As to quaternary structure, homodimer. Part of the ribosomal stalk of the 50S ribosomal subunit. Forms a multimeric L10(L12)X complex, where L10 forms an elongated spine to which 2 to 4 L12 dimers bind in a sequential fashion. Binds GTP-bound translation factors.

Functionally, forms part of the ribosomal stalk which helps the ribosome interact with GTP-bound translation factors. Is thus essential for accurate translation. This chain is Large ribosomal subunit protein bL12, found in Mannheimia succiniciproducens (strain KCTC 0769BP / MBEL55E).